Reading from the N-terminus, the 341-residue chain is Phosphate acyltransferase (341 aa).

It belongs to the PlsX family. Homodimer. Probably interacts with PlsY.

The protein resides in the cytoplasm. The enzyme catalyses a fatty acyl-[ACP] + phosphate = an acyl phosphate + holo-[ACP]. Its pathway is lipid metabolism; phospholipid metabolism. Functionally, catalyzes the reversible formation of acyl-phosphate (acyl-PO(4)) from acyl-[acyl-carrier-protein] (acyl-ACP). This enzyme utilizes acyl-ACP as fatty acyl donor, but not acyl-CoA. This is Phosphate acyltransferase from Photobacterium profundum (strain SS9).